We begin with the raw amino-acid sequence, 512 residues long: FAD-linked oxidoreductase iacH (512 aa).

Residues 1–22 (MVSLKACVVAYGFTLLPALVSG) form the signal peptide. 8 N-linked (GlcNAc...) asparagine glycosylation sites follow: Asn39, Asn55, Asn69, Asn210, Asn217, Asn278, Asn295, and Asn367. The FAD-binding PCMH-type domain maps to 77-248 (LDTPDVQLVV…TSLEKKIYPG (172 aa)).

It belongs to the oxygen-dependent FAD-linked oxidoreductase family. FAD is required as a cofactor.

It functions in the pathway secondary metabolite biosynthesis. In terms of biological role, FAD-linked oxidoreductase; part of the gene cluster that mediates the biosynthesis of iso-A82775C, a enylepoxycyclohexane and biosynthetic precursor of the chloropestolide anticancer natural products. Within the cluster, the prenyltransferase iacE prenylates siccayne to generate pestalodiol E, using dimethylallyl diphosphate (DMAPP) as cosubstrate. The probable oxidoreductase iacF is then involved in the epoxidation of pestalodiol F to pestalodiol F, which is further converted to pestalofone A by the short-chain dehydrogenase/reductase iacG. Iso-A82775C is subsequently generated from pestalofone A by the short-chain dehydrogenase/reductase iacC. Iso-A82775C is further condensed with maldoxin via a Diels-Alder reaction to produce the anticancer natural products chloropestolides A to E. The sequence is that of FAD-linked oxidoreductase iacH from Pestalotiopsis fici (strain W106-1 / CGMCC3.15140).